The sequence spans 676 residues: Zinc finger protein 418 (676 aa).

In terms of domain architecture, KRAB spans 5–91 (VAFEDVAVNF…HSCEMCGAIL (87 aa)). C2H2-type zinc fingers lie at residues 82 to 105 (HSCEMCGAILGDILHLADHQGTHH), 230 to 252 (CYCWECGKSFSKYDSVSNHQRVH), 258 to 280 (YECGECGKSFSHKGSLVQHQRVH), 286 to 308 (YECGECGKSFSHKGSLVQHQRVH), 314 to 336 (YECGECGKSFSQNGTLIKHQRVH), 342 to 364 (YECEECGKCFTQKGNLIQHQRGH), 370 to 392 (YECEECGKCFSQKGTLTEHHRVH), 398 to 420 (YECGECGKSFSRKGHLRNHQRGH), 426 to 448 (YECGECGKSFSRKGNLIQHQRSH), 454 to 476 (YECRECRKLFRGKSHLIEHQRVH), 482 to 504 (YECNECGKSFQDSSGFRVHQRVH), 510 to 532 (FECSECGKSFPQSCSLLRHRRVH), 538 to 560 (YECGECGKSFHQSSSLLRHQKTH), 591 to 613 (YECRECGKTFTRRSAHFKHQRLH), 619 to 641 (YECSECGKSFAETFSLTEHRRVH), and 647 to 669 (YECSECGKSFHRSSSLLRHQRVH).

The protein belongs to the krueppel C2H2-type zinc-finger protein family. As to expression, highly expressed in heart.

Its subcellular location is the nucleus. Its function is as follows. Transcriptional repressor. May play a role as regulator of the ubiquitin-proteasome system and autophagy-lysosomal pathway. This is Zinc finger protein 418 (ZNF418) from Homo sapiens (Human).